Reading from the N-terminus, the 204-residue chain is Cytochrome c biogenesis ATP-binding export protein CcmA (204 aa).

Residues 2 to 202 (LEIRNVTCIR…DSNELKKIRL (201 aa)) form the ABC transporter domain. 34–41 (GQNGAGKT) is a binding site for ATP.

This sequence belongs to the ABC transporter superfamily. CcmA exporter (TC 3.A.1.107) family. The complex is composed of two ATP-binding proteins (CcmA) and two transmembrane proteins (CcmB).

Its subcellular location is the cell inner membrane. It catalyses the reaction heme b(in) + ATP + H2O = heme b(out) + ADP + phosphate + H(+). Its function is as follows. Part of the ABC transporter complex CcmAB involved in the biogenesis of c-type cytochromes; once thought to export heme, this seems not to be the case, but its exact role is uncertain. Responsible for energy coupling to the transport system. The polypeptide is Cytochrome c biogenesis ATP-binding export protein CcmA (Aliivibrio fischeri (strain ATCC 700601 / ES114) (Vibrio fischeri)).